Reading from the N-terminus, the 506-residue chain is CDK5 regulatory subunit-associated protein 3 (506 aa).

3 consecutive short sequence motifs (shuffled ATG8-binding motif) follow at residues 267-270, 292-295, and 310-313; these read IDWG. Residues 269–506 form a required for interaction with UFL1 and mediates interaction with CHEK1 region; that stretch reads WGDFGVEAVS…RPVNLMGTSL (238 aa). Residues 355-370 form an RPL10a-binding domain (RBD) region; sequence DELMELEIFLARRAVE. Residue lysine 450 forms a Glycyl lysine isopeptide (Lys-Gly) (interchain with G-Cter in SUMO2) linkage.

It belongs to the CDK5RAP3 family. Substrate adapter component of the UFM1 ribosome E3 ligase (UREL) complex, composed of UFL1, DDRGK1 and CDK5RAP3. Interaction with UFL1 anchors CDK5RAP3 in the cytoplasm, preventing its translocation to the nucleus which allows expression of the CCND1 cyclin and progression of cells through the G1/S transition. Interacts with ATG8 family proteins MAP1LC3A, MAP1LC3B, GABARAP, GABARAPL1 and GABARAPL2. Interacts with CDK5R1; competes with CDK5RAP1 and CDK5RAP2. Interacts with RELA. Interacts with CHEK1; may negatively regulate CHEK1 and thereby stimulate entry into mitosis. Interacts with CDKN2A/ARF and MDM2; forms a ternary complex involved in regulation of p53/TP53. Interacts with MAPK14. Interacts with CCNB1. Interacts with TUBG1; may regulate CDK5RAP3 in mitotic G2/M transition checkpoint. In terms of processing, may be phosphorylated by CDK5. Ubiquitinated. Probably triggers proteasomal degradation and is negatively regulated by UFL1. Post-translationally, may be ufmylated. In terms of processing, cleaved by caspases early during apoptosis, the resulting peptides may play a role in rupture of the nuclear envelope.

The protein resides in the endoplasmic reticulum membrane. Its subcellular location is the cytoplasm. It is found in the nucleus. It localises to the cytoskeleton. The protein localises to the microtubule organizing center. The protein resides in the centrosome. Functionally, substrate adapter of E3 ligase complexes mediating ufmylation, the covalent attachment of the ubiquitin-like modifier UFM1 to substrate proteins, and which is involved in various processes, such as ribosome recycling and reticulophagy (also called ER-phagy). As part of the UREL complex, plays a key role in ribosome recycling by promoting mono-ufmylation of RPL26/uL24 subunit of the 60S ribosome. Ufmylation of RPL26/uL24 occurs on free 60S ribosomes following ribosome dissociation: it weakens the junction between post-termination 60S subunits and SEC61 translocons, promoting release and recycling of the large ribosomal subunit from the endoplasmic reticulum membrane. Ufmylation of RPL26/uL24 and subsequent 60S ribosome recycling either take place after normal termination of translation or after ribosome stalling during cotranslational translocation at the endoplasmic reticulum. Within the UREL complex, CDK5RAP3 acts as a substrate adapter that constrains UFL1 ligase activity to mono-ufmylate RPL26/uL24 at 'Lys-134'. The UREL complex is also involved in reticulophagy in response to endoplasmic reticulum stress by promoting ufmylation of proteins such as CYB5R3, thereby promoting lysosomal degradation of ufmylated proteins. Also acts as a regulator of transcription: negatively regulates NF-kappa-B-mediated gene transcription through the control of RELA phosphorylation. Also regulates mitotic G2/M transition checkpoint and mitotic G2 DNA damage checkpoint. Through its interaction with CDKN2A/ARF and MDM2 may induce MDM2-dependent p53/TP53 ubiquitination, stabilization and activation in the nucleus, thereby promoting G1 cell cycle arrest and inhibition of cell proliferation. May also play a role in the rupture of the nuclear envelope during apoptosis. May regulate MAPK14 activity by regulating its dephosphorylation by PPM1D/WIP1. Required for liver development. This chain is CDK5 regulatory subunit-associated protein 3, found in Pongo abelii (Sumatran orangutan).